Consider the following 593-residue polypeptide: Solute carrier family 13 member 2 (593 aa).

Helical transmembrane passes span 11–31 (YRMY…PILV), 53–73 (ALPL…MGIM), 86–106 (TNVL…WNLH), and 121–141 (PALL…WISN). A compositionally biased stretch (polar residues) spans 164–184 (SNVEEGSDNPTFELQEPSPQK). Residues 164–204 (SNVEEGSDNPTFELQEPSPQKETSKVDEKDNGQAQPLPAVP) form a disordered region. A compositionally biased stretch (basic and acidic residues) spans 185–194 (ETSKVDEKDN). 8 helical membrane passes run 221–241 (GMSL…LTGT), 270–290 (FAFP…QILF), 327–347 (PMSF…LLWF), 369–389 (VMVS…MVPS), 451–471 (LMPL…LLVA), 485–505 (LLLP…LYVM), 514–534 (LAFM…FGGL), and 543–563 (GIML…SWGV).

It belongs to the SLC13A/DASS transporter (TC 2.A.47) family. NADC subfamily. Abundant in kidney and small intestine.

The protein localises to the apical cell membrane. The enzyme catalyses succinate(out) + 3 Na(+)(out) = succinate(in) + 3 Na(+)(in). It carries out the reaction fumarate(out) + 3 Na(+)(out) = fumarate(in) + 3 Na(+)(in). The catalysed reaction is 2-oxoglutarate(out) + 3 Na(+)(out) = 2-oxoglutarate(in) + 3 Na(+)(in). Its activity is regulated as follows. Li(+) decreases succinate transport in the presence of Na(+), by competing at one of the three cation binding sites. In terms of biological role, low-affinity sodium-dicarboxylate cotransporter, that mediates the entry of citric acid cycle intermediates, such as succinate, citrate, fumarate and alpha-ketoglutarate (2-oxoglutarate) into the small intestine and renal proximal tubule. Transports the dicarboxylate into the cell with a probable stoichiometry of 3 Na(+) for 1 divalent dicarboxylate, rendering the process electrogenic. Citrate is transported in protonated form as a divalent anion, rather than the trivalent form which is normally found in blood. Has a critical role in renal dicarboxylate transport. The sequence is that of Solute carrier family 13 member 2 (SLC13A2) from Oryctolagus cuniculus (Rabbit).